We begin with the raw amino-acid sequence, 327 residues long: DNA primase large subunit PriL (327 aa).

Cys218, Cys290, Cys299, and Cys307 together coordinate [4Fe-4S] cluster.

The protein belongs to the eukaryotic-type primase large subunit family. As to quaternary structure, heterodimer of a small subunit (PriS) and a large subunit (PriL). [4Fe-4S] cluster is required as a cofactor.

Regulatory subunit of DNA primase, an RNA polymerase that catalyzes the synthesis of short RNA molecules used as primers for DNA polymerase during DNA replication. Stabilizes and modulates the activity of the small subunit, increasing the rate of DNA synthesis, and conferring RNA synthesis capability. The DNA polymerase activity may enable DNA primase to also catalyze primer extension after primer synthesis. May also play a role in DNA repair. This chain is DNA primase large subunit PriL, found in Thermoplasma volcanium (strain ATCC 51530 / DSM 4299 / JCM 9571 / NBRC 15438 / GSS1).